Here is a 215-residue protein sequence, read N- to C-terminus: Sperm acrosome membrane-associated protein 3 (215 aa).

Over 1–63 (MVSALRGAPL…EARSRALRRR (63 aa)) the chain is Cytoplasmic. Residues 64 to 84 (WCPAGIMLLALVCLLSCLLPS) traverse the membrane as a helical; Signal-anchor for type II membrane protein segment. Residues 85-215 (SEAKLYGRCE…LTEWVDGCDF (131 aa)) are Extracellular-facing. The region spanning 88–215 (KLYGRCELAR…LTEWVDGCDF (128 aa)) is the C-type lysozyme domain. Intrachain disulfides connect Cys-93/Cys-213, Cys-117/Cys-201, Cys-151/Cys-166, and Cys-162/Cys-180.

This sequence belongs to the glycosyl hydrolase 22 family. In terms of assembly, interacts with ASTL. Post-translationally, the processed form derives from the membrane form by proteolytic processing. In terms of tissue distribution, the processed form is expressed in sperm (at protein level). Expressed in testis, epididymis and placenta.

It is found in the cytoplasmic vesicle. It localises to the secretory vesicle. Its subcellular location is the acrosome membrane. The protein resides in the secreted. In terms of biological role, sperm surface membrane protein that may be involved in sperm-egg plasma membrane adhesion and fusion during fertilization. It could be a potential receptor for the egg oligosaccharide residue N-acetylglucosamine, which is present in the extracellular matrix over the egg plasma membrane. The processed form has no detectable bacteriolytic activity in vitro. In Homo sapiens (Human), this protein is Sperm acrosome membrane-associated protein 3 (SPACA3).